Consider the following 443-residue polypeptide: Mitochondrial enolase superfamily member 1 (443 aa).

Residues 24 to 26 (GSD) and Y34 each bind substrate. S148 carries the phosphoserine modification. Residue K220 participates in substrate binding. Catalysis depends on K222, which acts as the Proton donor/acceptor. A Mg(2+)-binding site is contributed by D250. Substrate-binding positions include N252, E276, E305, 355 to 357 (HAG), and E386. Residues E276 and E305 each coordinate Mg(2+). H355 is an active-site residue.

The protein belongs to the mandelate racemase/muconate lactonizing enzyme family. ENOSF1 subfamily. The cofactor is Mg(2+). In terms of processing, could be sumoylated.

The protein resides in the mitochondrion. It catalyses the reaction L-fuconate = 2-dehydro-3-deoxy-L-fuconate + H2O. In terms of biological role, plays a role in the catabolism of L-fucose, a sugar that is part of the carbohydrates that are attached to cellular glycoproteins. Catalyzes the dehydration of L-fuconate to 2-keto-3-deoxy-L-fuconate by the abstraction of the 2-proton to generate an enediolate intermediate that is stabilized by the magnesium ion. May down-regulate thymidylate synthase activity, possibly already at the RNA level, by promoting the degradation of TYMS mRNA via an antisense RNA-based mechanism. This chain is Mitochondrial enolase superfamily member 1 (ENOSF1), found in Bos taurus (Bovine).